The sequence spans 376 residues: VDFNVPLKEGVVKDPTRIAGSIPSIKKILETNPRGLVLMSHLGRPDGQRVEKHSLKPVLPKLEELLGTKVTFLNDCVGKDVEEAVKSSRNGEIILLENLRFHIEEEGKAVDAAGNKVKADPKAVKEFRKSLTNLGDLFFNDAFGTAHRAHSSMVGVDHKIRVAGYLLKKELEYFSKALESPTLPFCVVLGGAKVKDKIQLINSMLDNVNEMIIGGGMAFTFLKRLHNLEIGNSLFDEEGYKIVDELLEKAKKKNVKIHLPVDFLCGDSLEANANTAIHDLQSGIPKGWIGLDAGPKTIALNAEVIARANTIVWNGPQGRFEVDKFRNGSSDLLKKVIERTKTGATSIIGGGDTVNLVQQEKASNKVSHVSTGGGAS.

(2R)-3-phosphoglycerate contacts are provided by Val-1, Asp-2, Phe-3, Asn-4, Arg-17, Ser-40, His-41, Gly-43, Arg-44, Leu-99, Arg-100, His-147, and Arg-148. Residue Gly-191 coordinates ADP. Gly-191 is a CDP binding site. AMP contacts are provided by Ala-192 and Lys-193. Residue Ala-192 coordinates ATP. Residue Ala-192 participates in Mg(2+) binding. A CDP-binding site is contributed by Asp-196. A Mg(2+)-binding site is contributed by Asp-196. Lys-197 serves as a coordination point for AMP. Lys-197 is an ATP binding site. Gly-215 contributes to the ADP binding site. Position 215 (Gly-215) interacts with CDP. AMP-binding residues include Gly-216 and Gly-290. Gly-216 and Gly-290 together coordinate ATP. The CDP site is built by Gly-315 and Phe-320. Phe-320 is a binding site for ADP. AMP is bound at residue Glu-321. Glu-321, Asp-352, and Thr-353 together coordinate ATP. Asp-352 is a Mg(2+) binding site.

The protein belongs to the phosphoglycerate kinase family. Monomer. It depends on Mg(2+) as a cofactor.

The catalysed reaction is (2R)-3-phosphoglycerate + ATP = (2R)-3-phospho-glyceroyl phosphate + ADP. It functions in the pathway carbohydrate degradation; glycolysis; pyruvate from D-glyceraldehyde 3-phosphate: step 2/5. The polypeptide is Phosphoglycerate kinase (PGK) (Glaucoma chattoni).